Consider the following 197-residue polypeptide: NADH-quinone oxidoreductase subunit C (197 aa).

This sequence belongs to the complex I 30 kDa subunit family. As to quaternary structure, NDH-1 is composed of 14 different subunits. Subunits NuoB, C, D, E, F, and G constitute the peripheral sector of the complex.

It localises to the cell inner membrane. The enzyme catalyses a quinone + NADH + 5 H(+)(in) = a quinol + NAD(+) + 4 H(+)(out). Its function is as follows. NDH-1 shuttles electrons from NADH, via FMN and iron-sulfur (Fe-S) centers, to quinones in the respiratory chain. The immediate electron acceptor for the enzyme in this species is believed to be ubiquinone. Couples the redox reaction to proton translocation (for every two electrons transferred, four hydrogen ions are translocated across the cytoplasmic membrane), and thus conserves the redox energy in a proton gradient. The chain is NADH-quinone oxidoreductase subunit C from Neisseria gonorrhoeae (strain ATCC 700825 / FA 1090).